Reading from the N-terminus, the 174-residue chain is Small heat shock protein OV25-1 (174 aa).

In terms of domain architecture, sHSP spans 50–161 (LNECNIGNTL…ASRNIPIRAS (112 aa)). Positions 153-174 (SRNIPIRASPKEPEAKQKTKKQ) are disordered. Over residues 161–174 (SPKEPEAKQKTKKQ) the composition is skewed to basic and acidic residues.

Belongs to the small heat shock protein (HSP20) family.

The protein is Small heat shock protein OV25-1 (OV25-1) of Onchocerca volvulus.